Reading from the N-terminus, the 322-residue chain is Dioxygenase himG (322 aa).

Residues histidine 148 and histidine 229 each contribute to the Fe cation site.

It belongs to the PhyH family. In terms of assembly, homodimer. The cofactor is Fe cation.

The protein operates within secondary metabolite biosynthesis. Polyketide synthase-nonribosomal peptide synthetase; part of the him gene cluster that mediates the biosynthesis of himeic acid A, a ubiquitin-activating enzyme (E1) inhibitor. First, himA, together with the trans-enoyl reductase himH, catalyzes the formation of apolyketide chain, which is then condensed with leucine by the NRPS activity of himA. Dieckmann cyclization and release from himA gives a tetramic acid intermediate as the product of himA PKS-NRPS. HimG then catalyzes alpha-oxidation of the tetramic acid ring, with a subsequent rearrangement to yield apyrone intermediate. Two terminal methyl groups of polyketide and amide side chains are oxidized to carboxylic acids by himC cytochrome P450 monooxygenase to form himeic acid A. Himeic acid A is further converted to himeic acid B and C during culture growth. No gene responsible for pyrone to pyridone conversion was found in the him gene cluster and himeic acid A is non-enzymatically converted to himeic acid C by the incorporation of an ammonium nitrogen atom in a pH5 buffer, and to himeic acid B at a conversion ratio of 50% during incubation in MeOH for 5 days. This chain is Dioxygenase himG, found in Aspergillus japonicus.